Reading from the N-terminus, the 3579-residue chain is Protocadherin-like wing polarity protein stan (3579 aa).

Positions 1–29 are cleaved as a signal peptide; it reads MQTREFPQRPLGLLLVLLVVLLQSSLIKS. Residues 30-2816 are Extracellular-facing; it reads YLIIVHEDTP…EPSLLVQITS (2787 aa). N-linked (GlcNAc...) asparagine glycosylation is found at N46, N179, and N340. Cadherin domains are found at residues 360 to 464, 465 to 581, 582 to 689, 690 to 794, 795 to 897, 898 to 1007, 1008 to 1113, and 1114 to 1220; these read EQAL…SPTF, EAEQ…YPQF, SERT…APRF, YTSQ…DPAF, NPKY…APIF, ENAP…APAF, KSPL…PPTF, and ASDK…APVL. N-linked (GlcNAc...) asparagine glycosylation is present at N671. N886 is a glycosylation site (N-linked (GlcNAc...) asparagine). 3 N-linked (GlcNAc...) asparagine glycosylation sites follow: N1269, N1374, and N1441. The EGF-like 1; calcium-binding domain occupies 1482 to 1518; the sequence is EVDLCYSDPCQNGGTCVRREGGYTCVCPSTHTGQNCE. 3 disulfides stabilise this stretch: C1486-C1497, C1491-C1506, and C1508-C1517. The Laminin G-like 1 domain maps to 1556–1753; sequence LRARAFGRNS…VADNGTLAGC (198 aa). N1650, N1678, and N1747 each carry an N-linked (GlcNAc...) asparagine glycan. Disulfide bonds link C1727–C1753, C1760–C1771, C1765–C1780, and C1782–C1791. An EGF-like 2; calcium-binding domain is found at 1756-1792; that stretch reads KAPLCQSEPCFNGGTCREGWGTYSCECPEGYAGNSCQ. The region spanning 1796 to 1963 is the Laminin G-like 2 domain; it reads PAPWRFSGDG…TIRENVEDGC (168 aa). N-linked (GlcNAc...) asparagine glycosylation is present at N1843. Intrachain disulfides connect C1937–C1963, C1969–C1979, C1973–C1988, and C1990–C1999. Positions 1965–2000 constitute an EGF-like 3; calcium-binding domain; sequence SRAQCPDHCPNHSSCQSSWDLSTCECDSGYVGTDCA. N1975 carries N-linked (GlcNAc...) asparagine glycosylation. N2016, N2028, N2071, and N2088 each carry an N-linked (GlcNAc...) asparagine glycan. Intrachain disulfides connect C2092/C2095, C2097/C2114, C2116/C2125, and C2128/C2140. Residues 2095 to 2142 enclose the Laminin EGF-like domain; sequence CDCYSIGSFSGACNPLTGQCECREGVIGRRCDSCSNPYAEVTLSGCEV. N-linked (GlcNAc...) asparagine glycosylation is found at N2196 and N2320. A compositionally biased stretch (basic and acidic residues) spans 2553–2562; sequence QETQRLEIPS. Disordered stretches follow at residues 2553 to 2582, 2610 to 2635, and 2654 to 2684; these read QETQ…STEQ, HEIP…EREP, and VISP…GENE. The span at 2567–2579 shows a compositional bias: low complexity; sequence SSSSPSSSSSSGS. The region spanning 2653-2803 is the GAIN-B domain; sequence EVISPDSPEM…AVIVDVIDPE (151 aa). Disulfide bonds link C2747-C2785 and C2762-C2787. Positions 2747–2803 are GPS; the sequence is CVRWNSFTNQWTRLGCQTEIPDFDGDFNPAAQQAILVNCSCTHISSYAVIVDVIDPE. N2784 carries N-linked (GlcNAc...) asparagine glycosylation. A helical transmembrane segment spans residues 2817-2837; sequence YSAFLVSLPLLLGVLLALALL. The Cytoplasmic portion of the chain corresponds to 2838-2845; it reads RGQQTNSN. A helical transmembrane segment spans residues 2846 to 2866; sequence TIHQNIVLCVFCAELLFFVGM. Over 2867-2883 the chain is Extracellular; it reads QSRRQLLESEFPCKLTA. Residues 2884 to 2904 traverse the membrane as a helical segment; that stretch reads ICLHYFWLAAFAWTTVDCVHL. The Cytoplasmic portion of the chain corresponds to 2905 to 2919; that stretch reads YRMLTEMRDINHGPM. A helical membrane pass occupies residues 2920 to 2940; it reads GFYFAMGYGAPAIVVGLSVGV. At 2941 to 2959 the chain is on the extracellular side; that stretch reads RAHEYGNSLFCWLSVYEPV. The chain crosses the membrane as a helical span at residues 2960–2980; the sequence is VWWLVGPIAGMSVVNLLILFV. At 2981–3000 the chain is on the cytoplasmic side; it reads SVKAAFTLKDHVLGFGNLRT. A helical membrane pass occupies residues 3001–3021; it reads LLWLSVVSLPLMGVMWVLAVL. Residues 3022-3031 are Extracellular-facing; the sequence is AASEHSQLLS. The helical transmembrane segment at 3032-3052 threads the bilayer; the sequence is LLLSGVVLLHALFCLIGYCII. At 3053–3579 the chain is on the cytoplasmic side; the sequence is NKRVRENLQR…RNIDDDETTV (527 aa). Disordered stretches follow at residues 3111 to 3225, 3343 to 3377, 3458 to 3486, and 3499 to 3579; these read GISA…TPAY, LYGR…SGSQ, YHQQ…YHFP, and LSHT…ETTV. Positions 3113–3128 are enriched in low complexity; sequence SASSTTSRSTAKTSSS. Residues 3167–3191 show a composition bias toward basic and acidic residues; the sequence is RGGEEKPSRRQRKDSDSGSETDGRS. 2 positions are modified to phosphoserine: S3199 and S3200. Positions 3208–3223 are enriched in polar residues; the sequence is ARSSGTHRSTAVSSTP. Positions 3343–3352 are enriched in basic and acidic residues; the sequence is LYGRRGEYPD. The segment covering 3459 to 3468 has biased composition (low complexity); the sequence is HQQQQQQQQH. The segment covering 3469-3482 has biased composition (basic and acidic residues); sequence HLQDRLSEGSDKNG. Residues 3501 to 3513 show a composition bias toward polar residues; the sequence is HTQPPSLHGSQLM.

Belongs to the G-protein coupled receptor 2 family. In terms of assembly, interacts with ATP6AP2 (via N-terminus). In terms of tissue distribution, in the pupal wing, expressed at relatively even levels in all regions. Abundant in 6-9 hours embryos. Expressed at higher levels in pupae than larvae.

Its subcellular location is the cell membrane. The protein resides in the apical cell membrane. Functionally, involved in the fz signaling pathway that controls wing tissue polarity. Also mediates homophilic cell adhesion. May play a role in initiating prehair morphogenesis. May play a critical role in tissue polarity and in formation of normal dendrite fields. During planar cell polarity, stabilizes asymmetric PCP domains together with ATP6AP2. This chain is Protocadherin-like wing polarity protein stan (stan), found in Drosophila melanogaster (Fruit fly).